We begin with the raw amino-acid sequence, 505 residues long: Flagellin (505 aa).

Belongs to the bacterial flagellin family.

The protein localises to the secreted. It is found in the bacterial flagellum. In terms of biological role, flagellin is the subunit protein which polymerizes to form the filaments of bacterial flagella. The protein is Flagellin (fliC) of Salmonella enteritidis.